Consider the following 357-residue polypeptide: Heat-inducible transcription repressor HrcA (357 aa).

The protein belongs to the HrcA family.

Its function is as follows. Negative regulator of class I heat shock genes (grpE-dnaK-dnaJ and groELS operons). Prevents heat-shock induction of these operons. This chain is Heat-inducible transcription repressor HrcA, found in Anabaena sp. (strain L31).